The primary structure comprises 280 residues: Ribosomal RNA small subunit methyltransferase A (280 aa).

The S-adenosyl-L-methionine site is built by Asn-18, Leu-20, Gly-45, Glu-66, Asp-89, and Asn-110.

It belongs to the class I-like SAM-binding methyltransferase superfamily. rRNA adenine N(6)-methyltransferase family. RsmA subfamily.

The protein localises to the cytoplasm. It carries out the reaction adenosine(1518)/adenosine(1519) in 16S rRNA + 4 S-adenosyl-L-methionine = N(6)-dimethyladenosine(1518)/N(6)-dimethyladenosine(1519) in 16S rRNA + 4 S-adenosyl-L-homocysteine + 4 H(+). Functionally, specifically dimethylates two adjacent adenosines (A1518 and A1519) in the loop of a conserved hairpin near the 3'-end of 16S rRNA in the 30S particle. May play a critical role in biogenesis of 30S subunits. This is Ribosomal RNA small subunit methyltransferase A from Cupriavidus necator (strain ATCC 17699 / DSM 428 / KCTC 22496 / NCIMB 10442 / H16 / Stanier 337) (Ralstonia eutropha).